The sequence spans 560 residues: Protein AATF (560 aa).

N-acetylalanine is present on A2. A phosphoserine mark is found at S61 and S63. The disordered stretch occupies residues 76–208; it reads TSRKAWNEDH…GDRNSEDDGV (133 aa). Over residues 94–129 the composition is skewed to acidic residues; that stretch reads SDEEISDEEGSGDEDSEGLGLEEYDEDDLGAAEEQE. Phosphoserine is present on residues S150 and S155. A compositionally biased stretch (basic and acidic residues) spans 156–165; sequence DFEKFTKGMD. Positions 168–195 are enriched in acidic residues; it reads GSSEEEEDEESGMEEGDDAEDSQGESEE. 5 positions are modified to phosphoserine: S203, S273, S316, S320, and S321. The tract at residues 273-315 is POLR2J binding; it reads SALKNSHKALKALLRSLVGLQEELLFQYPDTRYLVDGTKPNAG. The disordered stretch occupies residues 309–333; sequence GTKPNAGSEEISSEDDELVEEKKQQ. Residues 316–372 are RB1 binding; that stretch reads SEEISSEDDELVEEKKQQRRRVPAKRKLEMEDYPSFMAKRFADFTVYRNRTLQKWHD. The RB1 and SP1 binding stretch occupies residues 373–472; it reads KTKLASGKLG…FYHQLLRELI (100 aa).

This sequence belongs to the AATF family. In terms of assembly, part of the small subunit (SSU) processome, composed of more than 70 proteins and the RNA chaperone small nucleolar RNA (snoRNA) U3. Interacts with POLR2J, RB1/RB, RBL1/P107 and RBL2/P130. Interacts with PAWR and SP1. May also bind MAPT. In terms of processing, hyperphosphorylated during the G1/S phase transition. As to expression, ubiquitously expressed. Expressed at high levels in brain, heart, kidney, placenta and thymus.

It is found in the nucleus. It localises to the nucleolus. Its function is as follows. Part of the small subunit (SSU) processome, first precursor of the small eukaryotic ribosomal subunit. During the assembly of the SSU processome in the nucleolus, many ribosome biogenesis factors, an RNA chaperone and ribosomal proteins associate with the nascent pre-rRNA and work in concert to generate RNA folding, modifications, rearrangements and cleavage as well as targeted degradation of pre-ribosomal RNA by the RNA exosome. May function as a general inhibitor of the histone deacetylase HDAC1. Binding to the pocket region of RB1 may displace HDAC1 from RB1/E2F complexes, leading to activation of E2F target genes and cell cycle progression. Conversely, displacement of HDAC1 from SP1 bound to the CDKN1A promoter leads to increased expression of this CDK inhibitor and blocks cell cycle progression. Also antagonizes PAWR mediated induction of aberrant amyloid peptide production in Alzheimer disease (presenile and senile dementia), although the molecular basis for this phenomenon has not been described to date. The protein is Protein AATF of Homo sapiens (Human).